Here is a 186-residue protein sequence, read N- to C-terminus: Ribosome-recycling factor (186 aa).

The protein belongs to the RRF family.

It is found in the cytoplasm. In terms of biological role, responsible for the release of ribosomes from messenger RNA at the termination of protein biosynthesis. May increase the efficiency of translation by recycling ribosomes from one round of translation to another. The protein is Ribosome-recycling factor of Wolinella succinogenes (strain ATCC 29543 / DSM 1740 / CCUG 13145 / JCM 31913 / LMG 7466 / NCTC 11488 / FDC 602W) (Vibrio succinogenes).